Here is a 264-residue protein sequence, read N- to C-terminus: MLARPDVFPGARAAACLTQFKRQSPLIHCLTNEVVQELTANVLLALGASPAMVVEPTEAAQFSRLADALLINIGTLNASRAESMLAAIEAANAAGTPWTLDPVAVGGLAYRTAFAQSLLGEKPAAIRGNASEIMALSGLQASGRGVDSADDSLAALPAARELARNSGAVVAVTGVVDYITDGQRDWAVAGGDVLMTRVVGTGCALSAVVAAFCSLPGDRLDNVATACRVMSHCGEMATRRAAGPGSFTPAFLDALYQLRPEDLQ.

M52 is a substrate binding site. Positions 127 and 173 each coordinate ATP. G200 is a substrate binding site.

The protein belongs to the Thz kinase family. The cofactor is Mg(2+).

The catalysed reaction is 5-(2-hydroxyethyl)-4-methylthiazole + ATP = 4-methyl-5-(2-phosphooxyethyl)-thiazole + ADP + H(+). Its pathway is cofactor biosynthesis; thiamine diphosphate biosynthesis; 4-methyl-5-(2-phosphoethyl)-thiazole from 5-(2-hydroxyethyl)-4-methylthiazole: step 1/1. Functionally, catalyzes the phosphorylation of the hydroxyl group of 4-methyl-5-beta-hydroxyethylthiazole (THZ). The sequence is that of Hydroxyethylthiazole kinase from Serratia proteamaculans (strain 568).